Consider the following 224-residue polypeptide: Orotate phosphoribosyltransferase (224 aa).

A 5-phospho-alpha-D-ribose 1-diphosphate-binding site is contributed by K29. 37 to 38 (FF) contacts orotate. Residues 75 to 76 (YK), R105, K106, K109, H111, and 130 to 138 (DDVITAGTS) each bind 5-phospho-alpha-D-ribose 1-diphosphate. The orotate site is built by T134 and R162.

It belongs to the purine/pyrimidine phosphoribosyltransferase family. PyrE subfamily. In terms of assembly, homodimer. Mg(2+) is required as a cofactor.

It carries out the reaction orotidine 5'-phosphate + diphosphate = orotate + 5-phospho-alpha-D-ribose 1-diphosphate. It functions in the pathway pyrimidine metabolism; UMP biosynthesis via de novo pathway; UMP from orotate: step 1/2. Its function is as follows. Catalyzes the transfer of a ribosyl phosphate group from 5-phosphoribose 1-diphosphate to orotate, leading to the formation of orotidine monophosphate (OMP). This Bordetella pertussis (strain Tohama I / ATCC BAA-589 / NCTC 13251) protein is Orotate phosphoribosyltransferase.